The chain runs to 203 residues: E3 ubiquitin-protein ligase RNF152 (203 aa).

Residues 12–55 (CQICFNYYSPRRRPKLLDCKHTCCSVCLQQMRTSQKDLRCPWCR) form an RING-type zinc finger. A helical membrane pass occupies residues 167 to 187 (SGVCTVILVACVLVFLLGIVL).

It belongs to the RNF152 family.

The protein localises to the lysosome membrane. It catalyses the reaction S-ubiquitinyl-[E2 ubiquitin-conjugating enzyme]-L-cysteine + [acceptor protein]-L-lysine = [E2 ubiquitin-conjugating enzyme]-L-cysteine + N(6)-ubiquitinyl-[acceptor protein]-L-lysine.. It functions in the pathway protein modification; protein ubiquitination. In terms of biological role, E3 ubiquitin-protein ligase that acts as a negative regulator of mTORC1 signaling by mediating ubiquitination of RagA/RRAGA and RHEB. Catalyzes 'Lys-63'-linked polyubiquitination of RagA/RRAGA in response to amino acid starvation, thereby regulating mTORC1 signaling. Also mediates monoubiquitination of RHEB, promoting its association with the TSC-TBC complex and subsequent inhibition. Also mediates 'Lys-48'-linked polyubiquitination of target proteins and their subsequent targeting to the proteasome for degradation. The protein is E3 ubiquitin-protein ligase RNF152 of Gallus gallus (Chicken).